The primary structure comprises 93 residues: Small ribosomal subunit protein bS16 (93 aa).

Belongs to the bacterial ribosomal protein bS16 family.

This chain is Small ribosomal subunit protein bS16, found in Dictyoglomus thermophilum (strain ATCC 35947 / DSM 3960 / H-6-12).